A 480-amino-acid polypeptide reads, in one-letter code: MFS-type transporter oryF (480 aa).

Residues 1–10 (MAEEVNERTR) are compositionally biased toward basic and acidic residues. The tract at residues 1-24 (MAEEVNERTRLLSQSDDPSPSLEE) is disordered. Over residues 11–22 (LLSQSDDPSPSL) the composition is skewed to low complexity. The next 12 membrane-spanning stretches (helical) occupy residues 41 to 61 (LCIAVISVYGLISPVIAAIIV), 81 to 101 (AFVSVYVLGWSFAPLVVGPLS), 107 to 127 (ISLLNTGHGLFLVFNALCAFA), 138 to 158 (FITGAVGSAPLSIGAGIIGDL), 170 to 190 (LYTLGPLLGPAIAPITGAYIV), 197 to 217 (AIFAWCSLYILITWVVGLCTL), 264 to 284 (FLGTQPIIQVLSLFMGYLFGL), 308 to 328 (ALNYISIAGGFILGSQITGSL), 351 to 371 (ILMLPAALLVPTGLLIYGWSA), 378 to 398 (IMPNIGIGIYALGLIMSYQCI), 415 to 435 (GALTILRSLLGFVLPILAPLI), and 443 to 463 (WGSSLLALWALVMGGLVPILL).

Belongs to the major facilitator superfamily.

It localises to the membrane. Its function is as follows. MFS-type transporter; part of the gene cluster that mediates the biosynthesis of oryzines, natural products with an unusual maleidride backbone. The polypeptide is MFS-type transporter oryF (Aspergillus oryzae (strain ATCC 42149 / RIB 40) (Yellow koji mold)).